We begin with the raw amino-acid sequence, 386 residues long: MELIRIAMKKDLENDNSLMNKWATVAGLKNPNPLYDFLNHDGKTFNEFSSIVNIVKSQYPDREYELMKDYCLNLDVKTKAARSALEYADANMFFEIEDVLIDSMISCSNMKSKEYGKVYKIHRELSNSVITEFEAVKRLGKLNIKTPEMNSFSRLLLLYHYLSTGNFSPMAQLIKQIDLSEISENMYIRNTYQTRVHVLMSNIKLNENSLEECREYSKKALESTNILRFQVFSYLTIGNSLLFSNYELAQENFLKGLSISVQNENYNMIFQQALCFLNNVWRKENKWINFESDSIMDLQEQAHCFINFNENSKAKEVLDKLDLLVHNDNELAMHYYLKGRLEQNKACFYSSIEYFKKSNDKFLIRLPLLELQKMGENQKLLELLLL.

In terms of assembly, homodimer. Interacts with the viral arbitrium peptide, this interaction changes the oligomeric state of AimR from an active dimer to an inactive monomer leading to lysogeny.

Its function is as follows. Transcriptional regulator which is part of the latency-replication switch system that decides at the onset of infection whether to replicate and lyse the host or to lysogenize (latency) and keep the host viable. Activates the transcription of the aimX locus. Transcriptional activation of aimX seems to lead to the productive viral replication (lytic cycle), aimX possibly acting as a regulatory non-coding RNA. This Bacillus pumilus (Bacillus mesentericus) protein is AimR transcriptional regulator.